Here is a 513-residue protein sequence, read N- to C-terminus: ATP synthase subunit alpha (513 aa).

169–176 (GDRQTGKT) is a binding site for ATP.

It belongs to the ATPase alpha/beta chains family. As to quaternary structure, F-type ATPases have 2 components, CF(1) - the catalytic core - and CF(0) - the membrane proton channel. CF(1) has five subunits: alpha(3), beta(3), gamma(1), delta(1), epsilon(1). CF(0) has three main subunits: a(1), b(2) and c(9-12). The alpha and beta chains form an alternating ring which encloses part of the gamma chain. CF(1) is attached to CF(0) by a central stalk formed by the gamma and epsilon chains, while a peripheral stalk is formed by the delta and b chains.

It is found in the cell inner membrane. It catalyses the reaction ATP + H2O + 4 H(+)(in) = ADP + phosphate + 5 H(+)(out). Functionally, produces ATP from ADP in the presence of a proton gradient across the membrane. The alpha chain is a regulatory subunit. This Polynucleobacter necessarius subsp. necessarius (strain STIR1) protein is ATP synthase subunit alpha.